Here is an 879-residue protein sequence, read N- to C-terminus: MKELTSSQIRQMYLDFFKSKGHTIEPSASLVPKDDPSLLWINSGVATMKKYFSGQVVPENPRLTSSQKSIRTNDIENVGKTARHHTLFEMLGNFSVGDYFKKEAIAWAWELLTSPDWFGWDPDKLYMTVYPKDTDAKDAWEAVGVAPDHIIAVEDNFWDIGEGPSGPDSEIFYDRGEAFNNLAADDPENYPGGENERYLEVWNIVFSQFNHEPDGTYKPLPRKNIDTGMGLERVVSIFQNAKTNFETDLFMPLIEKTAALSAGKHYGANAEDDISFKVIADHARAITFAIGDGALPGNEGRGYVIRRLIRRAIVNGQKLGIEGAFLDQLVPVVGQIMQAYYPEVLEQSDYIAKVVRSEEDRFGETLTDGLNLLNSLIADLKQQGGNQIAGADAFKLYDTYGFPVELTEEYADDQGITVDEAGFKAEMQKQKDRARNARGKQKAMGLQHDLLINVKTPSEYVGYTQLATTSKLTVLVAGDELVDHVTSGTAEAMFDVTPFYAEMGGQVADKGDILDEAGHVVAHVADVQHAPNGQNLHTLTVVAPMETGATYQLKVDTIFHSKVEKNHTATHLLDKALREVFGEHTQQAGSLVEGDYLRFDFTHFGQVDPADLAKAEALVNQKIFEELPVTTVETDIESAKKMGAIALFSEKYGKVVRVVSAGDFVTEFCGGNHVKNTNEIGLFKITSESGVGAGVRRIEAVTSAAAYAYLHDHDEILNAVGADLKVTQVDEIEQKVQALQAQVKALEQQQATLEGKLASQEAGAVFDHVTTAGNYQLISGTVQVSKMDQLRALADTWRDQALSDVLVLGAEVNGKANLIVAVSADKQKQVKAGDLIKAISPKINGGGGGRPNLAQAGGKNPAGLPDAMTAAADWLAEQK.

Zn(2+) is bound by residues H567, H571, C669, and H673.

This sequence belongs to the class-II aminoacyl-tRNA synthetase family. Requires Zn(2+) as cofactor.

The protein resides in the cytoplasm. It carries out the reaction tRNA(Ala) + L-alanine + ATP = L-alanyl-tRNA(Ala) + AMP + diphosphate. In terms of biological role, catalyzes the attachment of alanine to tRNA(Ala) in a two-step reaction: alanine is first activated by ATP to form Ala-AMP and then transferred to the acceptor end of tRNA(Ala). Also edits incorrectly charged Ser-tRNA(Ala) and Gly-tRNA(Ala) via its editing domain. This is Alanine--tRNA ligase from Levilactobacillus brevis (strain ATCC 367 / BCRC 12310 / CIP 105137 / JCM 1170 / LMG 11437 / NCIMB 947 / NCTC 947) (Lactobacillus brevis).